Consider the following 305-residue polypeptide: Glycine--tRNA ligase alpha subunit (305 aa).

This sequence belongs to the class-II aminoacyl-tRNA synthetase family. As to quaternary structure, tetramer of two alpha and two beta subunits.

Its subcellular location is the cytoplasm. It catalyses the reaction tRNA(Gly) + glycine + ATP = glycyl-tRNA(Gly) + AMP + diphosphate. This is Glycine--tRNA ligase alpha subunit from Streptococcus sanguinis (strain SK36).